A 207-amino-acid polypeptide reads, in one-letter code: Small ribosomal subunit protein uS4 (207 aa).

Residues lysine 22–leucine 54 form a disordered region. Residues serine 27 to proline 38 are compositionally biased toward basic and acidic residues. Positions glycine 42 to phenylalanine 52 are enriched in polar residues. The 61-residue stretch at serine 97 to isoleucine 157 folds into the S4 RNA-binding domain.

This sequence belongs to the universal ribosomal protein uS4 family. In terms of assembly, part of the 30S ribosomal subunit. Contacts protein S5. The interaction surface between S4 and S5 is involved in control of translational fidelity.

Functionally, one of the primary rRNA binding proteins, it binds directly to 16S rRNA where it nucleates assembly of the body of the 30S subunit. With S5 and S12 plays an important role in translational accuracy. This is Small ribosomal subunit protein uS4 from Leptothrix cholodnii (strain ATCC 51168 / LMG 8142 / SP-6) (Leptothrix discophora (strain SP-6)).